Reading from the N-terminus, the 865-residue chain is Probable beta-glucosidase J (865 aa).

The active site involves D233. N-linked (GlcNAc...) asparagine glycosylation is found at N330, N447, N503, and N764. The region spanning 411-579 is the PA14 domain; it reads TGQPGYTFRV…DTDTAIQQAV (169 aa).

Belongs to the glycosyl hydrolase 3 family.

Its subcellular location is the secreted. The catalysed reaction is Hydrolysis of terminal, non-reducing beta-D-glucosyl residues with release of beta-D-glucose.. It participates in glycan metabolism; cellulose degradation. In terms of biological role, beta-glucosidases are one of a number of cellulolytic enzymes involved in the degradation of cellulosic biomass. Catalyzes the last step releasing glucose from the inhibitory cellobiose. The polypeptide is Probable beta-glucosidase J (bglJ) (Aspergillus fumigatus (strain ATCC MYA-4609 / CBS 101355 / FGSC A1100 / Af293) (Neosartorya fumigata)).